We begin with the raw amino-acid sequence, 24 residues long: Coenzyme PQQ synthesis protein A (24 aa).

Residues 16–20 constitute a cross-link (pyrroloquinoline quinone (Glu-Tyr)); the sequence is EITMY.

Belongs to the PqqA family.

Its pathway is cofactor biosynthesis; pyrroloquinoline quinone biosynthesis. Required for coenzyme pyrroloquinoline quinone (PQQ) biosynthesis. PQQ is probably formed by cross-linking a specific glutamate to a specific tyrosine residue and excising these residues from the peptide. The chain is Coenzyme PQQ synthesis protein A from Cupriavidus taiwanensis (strain DSM 17343 / BCRC 17206 / CCUG 44338 / CIP 107171 / LMG 19424 / R1) (Ralstonia taiwanensis (strain LMG 19424)).